Here is a 243-residue protein sequence, read N- to C-terminus: NH(3)-dependent NAD(+) synthetase (243 aa).

Position 31–38 (31–38) interacts with ATP; it reads GLSGGVDS. Asp37 provides a ligand contact to Mg(2+). Arg116 contacts deamido-NAD(+). Thr136 lines the ATP pocket. Mg(2+) is bound at residue Glu141. Lys149 and Asp156 together coordinate deamido-NAD(+). Positions 165 and 187 each coordinate ATP. 233-234 contacts deamido-NAD(+); it reads HK.

Belongs to the NAD synthetase family. As to quaternary structure, homodimer.

The catalysed reaction is deamido-NAD(+) + NH4(+) + ATP = AMP + diphosphate + NAD(+) + H(+). It participates in cofactor biosynthesis; NAD(+) biosynthesis; NAD(+) from deamido-NAD(+) (ammonia route): step 1/1. Functionally, catalyzes the ATP-dependent amidation of deamido-NAD to form NAD. Uses ammonia as a nitrogen source. This is NH(3)-dependent NAD(+) synthetase from Carboxydothermus hydrogenoformans (strain ATCC BAA-161 / DSM 6008 / Z-2901).